Consider the following 201-residue polypeptide: Superoxide dismutase [Mn/Fe] (201 aa).

Fe(3+) is bound by residues His27, His75, Asp161, and His165. Positions 27, 75, 161, and 165 each coordinate Mn(2+).

It belongs to the iron/manganese superoxide dismutase family. Homotetramer. Mn(2+) serves as cofactor. The cofactor is Fe(3+).

It carries out the reaction 2 superoxide + 2 H(+) = H2O2 + O2. Shows decreasing activity with increasing pH. Slightly inhibited by azide and fluoride at pH 7-8; the inhibition is drastically increased towards lower pH. Functionally, destroys superoxide anion radicals which are normally produced within the cells and which are toxic to biological systems. Catalyzes the dismutation of superoxide anion radicals into O2 and H2O2 by successive reduction and oxidation of the transition metal ion at the active site. In Propionibacterium freudenreichii subsp. shermanii, this protein is Superoxide dismutase [Mn/Fe] (sodA).